A 74-amino-acid chain; its full sequence is Protein WFDC9 (74 aa).

Residues M1 to L19 form the signal peptide.

The protein resides in the secreted. In Rattus norvegicus (Rat), this protein is Protein WFDC9 (Wfdc9).